Here is a 711-residue protein sequence, read N- to C-terminus: Long-chain-fatty-acid--CoA ligase 4 (711 aa).

Residues 8-28 (LTIVLLPVHLLITIYSALIFI) traverse the membrane as a helical; Signal-anchor for type III membrane protein segment. Over 29–711 (PWYFLTNAKK…KDIERMYGGK (683 aa)) the chain is Cytoplasmic. Serine 447 carries the phosphoserine modification.

It belongs to the ATP-dependent AMP-binding enzyme family. Mg(2+) serves as cofactor.

It localises to the mitochondrion outer membrane. The protein localises to the peroxisome membrane. It is found in the microsome membrane. The protein resides in the endoplasmic reticulum membrane. Its subcellular location is the cell membrane. It catalyses the reaction a long-chain fatty acid + ATP + CoA = a long-chain fatty acyl-CoA + AMP + diphosphate. The catalysed reaction is (5Z,8Z,11Z,14Z)-eicosatetraenoate + ATP + CoA = (5Z,8Z,11Z,14Z)-eicosatetraenoyl-CoA + AMP + diphosphate. The enzyme catalyses 15-hydroxy-(5Z,8Z,11Z,13E)-eicosatetraenoate + ATP + CoA = 15-hydroxy-(5Z,8Z,11Z,13E)-eicosatetraenoyl-CoA + AMP + diphosphate. It carries out the reaction 12-hydroxy-(5Z,8Z,10E,14Z)-eicosatetraenoate + ATP + CoA = 12-hydroxy-(5Z,8Z,10E,14Z)-eicosatetraenoyl-CoA + AMP + diphosphate. It catalyses the reaction 5-hydroxy-(6E,8Z,11Z,14Z)-eicosatetraenoate + ATP + CoA = 5-hydroxy-(6E,8Z,11Z,14Z)-eicosatetraenoyl-CoA + AMP + diphosphate. The catalysed reaction is 5,6-epoxy-(8Z,11Z,14Z)-eicosatrienoate + ATP + CoA = 5,6-epoxy-(8Z,11Z,14Z)-eicosatrienoyl-CoA + AMP + diphosphate. The enzyme catalyses 14,15-epoxy-(5Z,8Z,11Z)-eicosatrienoate + ATP + CoA = 14,15-epoxy-(5Z,8Z,11Z)-eicosatrienoyl-CoA + AMP + diphosphate. It carries out the reaction 11,12-epoxy-(5Z,8Z,14Z)-eicosatrienoate + ATP + CoA = 11,12-epoxy-(5Z,8Z,14Z)-eicosatrienoyl-CoA + AMP + diphosphate. It catalyses the reaction 8,9-epoxy-(5Z,11Z,14Z)-eicosatrienoate + ATP + CoA = 8,9-epoxy-(5Z,11Z,14Z)-eicosatrienoyl-CoA + AMP + diphosphate. The catalysed reaction is hexadecanoate + ATP + CoA = hexadecanoyl-CoA + AMP + diphosphate. The enzyme catalyses (E)-hexadec-2-enoate + ATP + CoA = (2E)-hexadecenoyl-CoA + AMP + diphosphate. Both triacsin C and rosiglitazone inhibit arachidonoyl-CoA ligase activity. Its function is as follows. Catalyzes the conversion of long-chain fatty acids to their active form acyl-CoA for both synthesis of cellular lipids, and degradation via beta-oxidation. Preferentially activates arachidonate and eicosapentaenoate as substrates. Preferentially activates 8,9-EET &gt; 14,15-EET &gt; 5,6-EET &gt; 11,12-EET. Modulates glucose-stimulated insulin secretion by regulating the levels of unesterified EETs. Modulates prostaglandin E2 secretion. In Rattus norvegicus (Rat), this protein is Long-chain-fatty-acid--CoA ligase 4 (Acsl4).